A 279-amino-acid polypeptide reads, in one-letter code: Undecaprenyl-diphosphatase (279 aa).

Transmembrane regions (helical) follow at residues 45–65 (FVEM…IVIY), 85–105 (WQLW…ALPF), 113–133 (FNFM…FIWV), 188–208 (SVAA…YSGL), 226–246 (LILL…IRFL), and 255–275 (FTIF…YWLV).

The protein belongs to the UppP family.

The protein resides in the cell membrane. The catalysed reaction is di-trans,octa-cis-undecaprenyl diphosphate + H2O = di-trans,octa-cis-undecaprenyl phosphate + phosphate + H(+). Functionally, catalyzes the dephosphorylation of undecaprenyl diphosphate (UPP). Confers resistance to bacitracin. The protein is Undecaprenyl-diphosphatase of Streptococcus agalactiae serotype Ia (strain ATCC 27591 / A909 / CDC SS700).